Reading from the N-terminus, the 488-residue chain is Protein unzipped (488 aa).

A signal peptide spans 1 to 21 (MTSNSCLISLGLLLVLIQILA). Topologically, residues 22-465 (PAKAAEHSVF…DVALAGFGVN (444 aa)) are extracellular. 4 N-linked (GlcNAc...) asparagine glycosylation sites follow: Asn-35, Asn-232, Asn-317, and Asn-374. The span at 380 to 400 (TTTTTTTTSTSTTTHATTTST) shows a compositional bias: low complexity. The interval 380 to 453 (TTTTTTTTST…EAPENMSSDP (74 aa)) is disordered. N-linked (GlcNAc...) asparagine glycosylation is present at Asn-448. The helical transmembrane segment at 466-486 (AAGSTFIAGSALLTLLLTIFL) threads the bilayer. Residues 487-488 (SL) lie on the Cytoplasmic side of the membrane.

It localises to the membrane. Functionally, required for normal axon patterning during neurogenesis. In Drosophila melanogaster (Fruit fly), this protein is Protein unzipped (uzip).